The primary structure comprises 228 residues: DNA mismatch repair protein MutH (228 aa).

The protein belongs to the MutH family.

The protein localises to the cytoplasm. Sequence-specific endonuclease that cleaves unmethylated GATC sequences. It is involved in DNA mismatch repair. The sequence is that of DNA mismatch repair protein MutH from Yersinia pseudotuberculosis serotype IB (strain PB1/+).